The chain runs to 288 residues: Formamidopyrimidine-DNA glycosylase (288 aa).

Catalysis depends on proline 2, which acts as the Schiff-base intermediate with DNA. Glutamate 3 acts as the Proton donor in catalysis. Catalysis depends on lysine 58, which acts as the Proton donor; for beta-elimination activity. 3 residues coordinate DNA: histidine 99, arginine 118, and lysine 161. The FPG-type zinc-finger motif lies at 252–288 (RVYDREAEPCPREGCGGTIKRIVQAGRSTFFCAKCQR). Arginine 278 serves as the catalytic Proton donor; for delta-elimination activity.

Belongs to the FPG family. Monomer. It depends on Zn(2+) as a cofactor.

The catalysed reaction is Hydrolysis of DNA containing ring-opened 7-methylguanine residues, releasing 2,6-diamino-4-hydroxy-5-(N-methyl)formamidopyrimidine.. The enzyme catalyses 2'-deoxyribonucleotide-(2'-deoxyribose 5'-phosphate)-2'-deoxyribonucleotide-DNA = a 3'-end 2'-deoxyribonucleotide-(2,3-dehydro-2,3-deoxyribose 5'-phosphate)-DNA + a 5'-end 5'-phospho-2'-deoxyribonucleoside-DNA + H(+). Functionally, involved in base excision repair of DNA damaged by oxidation or by mutagenic agents. Acts as a DNA glycosylase that recognizes and removes damaged bases. Has a preference for oxidized purines, such as 7,8-dihydro-8-oxoguanine (8-oxoG). Has AP (apurinic/apyrimidinic) lyase activity and introduces nicks in the DNA strand. Cleaves the DNA backbone by beta-delta elimination to generate a single-strand break at the site of the removed base with both 3'- and 5'-phosphates. This Beijerinckia indica subsp. indica (strain ATCC 9039 / DSM 1715 / NCIMB 8712) protein is Formamidopyrimidine-DNA glycosylase.